We begin with the raw amino-acid sequence, 259 residues long: Thiazole synthase (259 aa).

Lys-100 (schiff-base intermediate with DXP) is an active-site residue. 1-deoxy-D-xylulose 5-phosphate contacts are provided by residues Gly-161, 187 to 188 (AG), and 209 to 210 (AS).

The protein belongs to the ThiG family. As to quaternary structure, homotetramer. Forms heterodimers with either ThiH or ThiS.

It localises to the cytoplasm. It catalyses the reaction [ThiS sulfur-carrier protein]-C-terminal-Gly-aminoethanethioate + 2-iminoacetate + 1-deoxy-D-xylulose 5-phosphate = [ThiS sulfur-carrier protein]-C-terminal Gly-Gly + 2-[(2R,5Z)-2-carboxy-4-methylthiazol-5(2H)-ylidene]ethyl phosphate + 2 H2O + H(+). It participates in cofactor biosynthesis; thiamine diphosphate biosynthesis. In terms of biological role, catalyzes the rearrangement of 1-deoxy-D-xylulose 5-phosphate (DXP) to produce the thiazole phosphate moiety of thiamine. Sulfur is provided by the thiocarboxylate moiety of the carrier protein ThiS. In vitro, sulfur can be provided by H(2)S. The polypeptide is Thiazole synthase (Salinispora arenicola (strain CNS-205)).